A 357-amino-acid chain; its full sequence is Glutamine synthetase root isozyme 1 (357 aa).

The region spanning 19–99 (IIAEYIWIGG…VMCDCYTPQG (81 aa)) is the GS beta-grasp domain. Positions 106 to 357 (KRYSAAKVFS…AETTILWNGN (252 aa)) constitute a GS catalytic domain.

Belongs to the glutamine synthetase family. In terms of assembly, homooctamer. Found mainly in the cortical tissues of seedling roots, and in the root tip.

The protein localises to the cytoplasm. It carries out the reaction L-glutamate + NH4(+) + ATP = L-glutamine + ADP + phosphate + H(+). Plays a role in the flow of nitrogen into nitrogenous organic compounds. The protein is Glutamine synthetase root isozyme 1 (GLN6) of Zea mays (Maize).